We begin with the raw amino-acid sequence, 396 residues long: Elongation factor Tu (396 aa).

The region spanning 10–206 (KLHVNVGTIG…ALDTHIPNPE (197 aa)) is the tr-type G domain. Residues 19-26 (GHVDHGKT) form a G1 region. 19–26 (GHVDHGKT) is a GTP binding site. Threonine 26 is a Mg(2+) binding site. Residues 60–64 (GITIS) form a G2 region. Positions 81–84 (DCPG) are G3. GTP is bound by residues 81 to 85 (DCPGH) and 136 to 139 (NKAD). A G4 region spans residues 136 to 139 (NKAD). The G5 stretch occupies residues 174 to 176 (SAL).

It belongs to the TRAFAC class translation factor GTPase superfamily. Classic translation factor GTPase family. EF-Tu/EF-1A subfamily. Monomer.

Its subcellular location is the cytoplasm. The enzyme catalyses GTP + H2O = GDP + phosphate + H(+). In terms of biological role, GTP hydrolase that promotes the GTP-dependent binding of aminoacyl-tRNA to the A-site of ribosomes during protein biosynthesis. The protein is Elongation factor Tu of Xylella fastidiosa (strain Temecula1 / ATCC 700964).